The primary structure comprises 342 residues: Glycerol-3-phosphate dehydrogenase [NAD(P)+] (342 aa).

Positions 11, 33, and 112 each coordinate NADPH. Lys112, Gly147, and Ser149 together coordinate sn-glycerol 3-phosphate. Ala151 contributes to the NADPH binding site. Residues Lys202, Asp255, Ser265, Arg266, and Asn267 each coordinate sn-glycerol 3-phosphate. The active-site Proton acceptor is Lys202. Arg266 lines the NADPH pocket. Positions 290 and 292 each coordinate NADPH.

The protein belongs to the NAD-dependent glycerol-3-phosphate dehydrogenase family.

The protein resides in the cytoplasm. The enzyme catalyses sn-glycerol 3-phosphate + NAD(+) = dihydroxyacetone phosphate + NADH + H(+). It catalyses the reaction sn-glycerol 3-phosphate + NADP(+) = dihydroxyacetone phosphate + NADPH + H(+). Its pathway is membrane lipid metabolism; glycerophospholipid metabolism. Functionally, catalyzes the reduction of the glycolytic intermediate dihydroxyacetone phosphate (DHAP) to sn-glycerol 3-phosphate (G3P), the key precursor for phospholipid synthesis. In Cupriavidus metallidurans (strain ATCC 43123 / DSM 2839 / NBRC 102507 / CH34) (Ralstonia metallidurans), this protein is Glycerol-3-phosphate dehydrogenase [NAD(P)+].